The following is a 60-amino-acid chain: Snake venom metalloproteinase bothrojaractivase (60 aa).

Residues 1–60 enclose the Peptidase M12B domain; sequence RYIELAVVADHGMFTKYRVHELVNTVNGFFRSKQDLIKVQKDKTLTSFGEWRERDLLPRI. Position 4 (E4) interacts with Ca(2+).

This sequence belongs to the venom metalloproteinase (M12B) family. P-I subfamily. Monomer. The cofactor is Zn(2+). As to expression, expressed by the venom gland.

It localises to the secreted. Its activity is regulated as follows. Completely inhibited by EDTA and EGTA. Partially inhibited by serine proteinase inhibitors PMSF and benzamidine. Not inhibited by cysteine proteinase inhibitors mercury ions and E-64. Is active without cofactors, although the presence of low concentrations of calcium and zinc ions enhanced its ability to convert prothrombin (F2) into active thrombin. In terms of biological role, prothrombin (F2) activator that is cofactor-independent. Also has fibrinolytic and fibrinogenolytic activity. It degrades the Aalpha-chain and more slowly the Bbeta-chain of fibrin and fibrinogen, while the gamma-chain is only partially and slowly affected. A dose-dependent procoagulant activity is shown in human plasma. This chain is Snake venom metalloproteinase bothrojaractivase, found in Bothrops jararaca (Jararaca).